Consider the following 3078-residue polypeptide: Homeobox-like protein HDP1 (3078 aa).

10 disordered regions span residues 1–29 (MKRG…DNSN), 59–164 (LHNS…INDN), 203–306 (SKRK…NIGK), 949–980 (NAEI…QDEN), 1323–1390 (DEDS…KDRK), 1415–1445 (SSSN…NNKN), 1939–2046 (KVND…QDKF), 2115–2216 (TNES…QYNY), 2599–2637 (AYMN…DDNI), and 2959–3019 (QQNN…NNGP). Positions 14-29 (CPSNGMASSQRNDNSN) are enriched in polar residues. Positions 59-84 (LHNSSSRESKDMKLSEEPRHINEKCI) are enriched in basic and acidic residues. Low complexity-rich tracts occupy residues 85 to 94 (NDNNKINNNN) and 114 to 127 (NNNN…TKNN). Composition is skewed to polar residues over residues 128–137 (IFFQTNNPDT), 148–157 (KQENTSSSLH), 209–229 (NSNN…NNIT), 237–252 (TSSI…NTVH), and 949–960 (NAEIHESNSPNH). Residues 1368–1380 (RKNKINRGSKGKH) are compositionally biased toward basic residues. Residues 1415–1433 (SSSNYEEGNSSSNEENNIS) show a composition bias toward low complexity. Positions 1434–1445 (TDKNISNTNNKN) are enriched in polar residues. Residues 1939–1993 (KVNDSNNSNDANEGNNANYSNDSSNTNNNTSSSTNNSNNNTSCSSQNTTTSSENN) are compositionally biased toward low complexity. Basic and acidic residues-rich tracts occupy residues 2012 to 2021 (KDTQKEKNNL) and 2029 to 2046 (YEDR…QDKF). Over residues 2115-2126 (TNESIKTNSDQN) the composition is skewed to polar residues. Positions 2139–2160 (MNNDNYNSSYDNVHNDNDNNMV) are enriched in low complexity. Positions 2163–2177 (DSSRQDNMEKQKSGE) are enriched in basic and acidic residues. Acidic residues predominate over residues 2192 to 2201 (NDNDNDDNND). 3 stretches are compositionally biased toward low complexity: residues 2202 to 2216 (NDNN…QYNY), 2602 to 2630 (NDNN…YSYD), and 2959 to 2989 (QQNN…QKNN). Over residues 2990–3006 (LSEVQVSNINTPSSYNI) the composition is skewed to polar residues. The DNA-binding stretch occupies residues 2991–3078 (SEVQVSNINT…GKRRKNEDNK (88 aa)).

Homodimer.

It is found in the nucleus. The protein localises to the chromosome. Transcriptional regulator which binds to the DNA motifs 5'-GTGCACAC-3' (motif A) and 5'-[GTA]TGTA[CT][GA]TAC-3' (motif B) of genes essential for early gametocyte development, including those critical for the expansion of the inner membrane complex (IMC). This is Homeobox-like protein HDP1 from Plasmodium falciparum (isolate NF54).